The chain runs to 351 residues: tRNA pseudouridine synthase D (351 aa).

Aspartate 81 (nucleophile) is an active-site residue. The region spanning glycine 158–leucine 304 is the TRUD domain.

The protein belongs to the pseudouridine synthase TruD family.

It catalyses the reaction uridine(13) in tRNA = pseudouridine(13) in tRNA. In terms of biological role, responsible for synthesis of pseudouridine from uracil-13 in transfer RNAs. The polypeptide is tRNA pseudouridine synthase D (Aliivibrio fischeri (strain ATCC 700601 / ES114) (Vibrio fischeri)).